Consider the following 510-residue polypeptide: NAD(P)H-quinone oxidoreductase subunit 2 B, chloroplastic (510 aa).

13 helical membrane passes run leucine 24–leucine 44, isoleucine 57–phenylalanine 77, isoleucine 99–isoleucine 119, methionine 124–cysteine 144, isoleucine 150–threonine 170, tyrosine 183–glycine 203, isoleucine 229–phenylalanine 249, tryptophan 295–isoleucine 315, methionine 323–aspartate 343, tyrosine 354–leucine 374, alanine 395–phenylalanine 415, leucine 418–leucine 438, and methionine 484–isoleucine 504.

This sequence belongs to the complex I subunit 2 family. In terms of assembly, NDH is composed of at least 16 different subunits, 5 of which are encoded in the nucleus.

It localises to the plastid. The protein localises to the chloroplast thylakoid membrane. It carries out the reaction a plastoquinone + NADH + (n+1) H(+)(in) = a plastoquinol + NAD(+) + n H(+)(out). The enzyme catalyses a plastoquinone + NADPH + (n+1) H(+)(in) = a plastoquinol + NADP(+) + n H(+)(out). Its function is as follows. NDH shuttles electrons from NAD(P)H:plastoquinone, via FMN and iron-sulfur (Fe-S) centers, to quinones in the photosynthetic chain and possibly in a chloroplast respiratory chain. The immediate electron acceptor for the enzyme in this species is believed to be plastoquinone. Couples the redox reaction to proton translocation, and thus conserves the redox energy in a proton gradient. The chain is NAD(P)H-quinone oxidoreductase subunit 2 B, chloroplastic from Drimys granadensis.